Consider the following 278-residue polypeptide: Large ribosomal subunit protein uL2 (278 aa).

The disordered stretch occupies residues 226-278; it reads MNPIDHPHGGGEGKTAAGRHPVSPWGTPSKGSRTRKNKRTSNMIVRSRYSKKG.

This sequence belongs to the universal ribosomal protein uL2 family. Part of the 50S ribosomal subunit. Forms a bridge to the 30S subunit in the 70S ribosome.

Its function is as follows. One of the primary rRNA binding proteins. Required for association of the 30S and 50S subunits to form the 70S ribosome, for tRNA binding and peptide bond formation. It has been suggested to have peptidyltransferase activity; this is somewhat controversial. Makes several contacts with the 16S rRNA in the 70S ribosome. The polypeptide is Large ribosomal subunit protein uL2 (Nitrosomonas europaea (strain ATCC 19718 / CIP 103999 / KCTC 2705 / NBRC 14298)).